The sequence spans 1141 residues: Eukaryotic translation initiation factor 3 subunit A (1141 aa).

Positions 319–501 constitute a PCI domain; sequence LQRMAAHVLL…NSIYFGTDLT (183 aa). Basic and acidic residues-rich tracts occupy residues 588–623 and 829–899; these read QNNAREEEEARRQEEESRKAKLAEQKRLEQEQEERE and AAEE…RGGD. 2 disordered regions span residues 588-631 and 829-1141; these read QNNA…QNEI and AAEE…VKRR. A Phosphoserine modification is found at Ser908. Composition is skewed to basic and acidic residues over residues 920–976, 990–1051, 1059–1087, and 1110–1131; these read ERND…EPDT, SRDD…EPQR, DAPRHADRENRRPAGERRDRDVRETRGDQ, and TREEKPAAKRDQAQEKENKAGD.

Belongs to the eIF-3 subunit A family. As to quaternary structure, component of the eukaryotic translation initiation factor 3 (eIF-3) complex. The eIF-3 complex interacts with pix.

The protein resides in the cytoplasm. RNA-binding component of the eukaryotic translation initiation factor 3 (eIF-3) complex, which is involved in protein synthesis of a specialized repertoire of mRNAs and, together with other initiation factors, stimulates binding of mRNA and methionyl-tRNAi to the 40S ribosome. The eIF-3 complex specifically targets and initiates translation of a subset of mRNAs involved in cell proliferation. This Drosophila sechellia (Fruit fly) protein is Eukaryotic translation initiation factor 3 subunit A.